Consider the following 137-residue polypeptide: Putative pre-16S rRNA nuclease (137 aa).

Belongs to the YqgF nuclease family.

The protein localises to the cytoplasm. Could be a nuclease involved in processing of the 5'-end of pre-16S rRNA. The sequence is that of Putative pre-16S rRNA nuclease from Oceanobacillus iheyensis (strain DSM 14371 / CIP 107618 / JCM 11309 / KCTC 3954 / HTE831).